The sequence spans 499 residues: Ethanolamine-phosphate phospho-lyase (499 aa).

Residue Lys278 is modified to N6-(pyridoxal phosphate)lysine. Residues 468–479 (RDSTTDSKENPS) show a composition bias toward basic and acidic residues. The disordered stretch occupies residues 468–499 (RDSTTDSKENPSRKRNGMCTDTHSLLSKRLKT).

This sequence belongs to the class-III pyridoxal-phosphate-dependent aminotransferase family. Homotetramer. It depends on pyridoxal 5'-phosphate as a cofactor.

The protein localises to the mitochondrion. The enzyme catalyses phosphoethanolamine + H2O = acetaldehyde + NH4(+) + phosphate. In terms of biological role, catalyzes the pyridoxal-phosphate-dependent breakdown of phosphoethanolamine, converting it to ammonia, inorganic phosphate and acetaldehyde. This Homo sapiens (Human) protein is Ethanolamine-phosphate phospho-lyase (ETNPPL).